A 270-amino-acid polypeptide reads, in one-letter code: Acetylglutamate kinase (270 aa).

Substrate contacts are provided by residues 41–42 (GG), Arg63, and Asn166.

This sequence belongs to the acetylglutamate kinase family. ArgB subfamily.

The protein resides in the cytoplasm. It carries out the reaction N-acetyl-L-glutamate + ATP = N-acetyl-L-glutamyl 5-phosphate + ADP. It participates in amino-acid biosynthesis; L-arginine biosynthesis; N(2)-acetyl-L-ornithine from L-glutamate: step 2/4. Catalyzes the ATP-dependent phosphorylation of N-acetyl-L-glutamate. The chain is Acetylglutamate kinase from Anaeromyxobacter dehalogenans (strain 2CP-C).